The primary structure comprises 418 residues: Putative competence-damage inducible protein (418 aa).

This sequence belongs to the CinA family.

This Streptococcus gordonii (strain Challis / ATCC 35105 / BCRC 15272 / CH1 / DL1 / V288) protein is Putative competence-damage inducible protein.